Reading from the N-terminus, the 198-residue chain is GTP cyclohydrolase-2 (198 aa).

52-56 (RMHSE) is a GTP binding site. Positions 57, 68, and 70 each coordinate Zn(2+). Residues Gln73, 94 to 96 (EGR), and Thr116 each bind GTP. The active-site Proton acceptor is Asp128. The Nucleophile role is filled by Arg130. Thr151 and Lys156 together coordinate GTP.

It belongs to the GTP cyclohydrolase II family. It depends on Zn(2+) as a cofactor.

The catalysed reaction is GTP + 4 H2O = 2,5-diamino-6-hydroxy-4-(5-phosphoribosylamino)-pyrimidine + formate + 2 phosphate + 3 H(+). It participates in cofactor biosynthesis; riboflavin biosynthesis; 5-amino-6-(D-ribitylamino)uracil from GTP: step 1/4. In terms of biological role, catalyzes the conversion of GTP to 2,5-diamino-6-ribosylamino-4(3H)-pyrimidinone 5'-phosphate (DARP), formate and pyrophosphate. The sequence is that of GTP cyclohydrolase-2 from Vibrio vulnificus (strain CMCP6).